The primary structure comprises 709 residues: Polyribonucleotide nucleotidyltransferase (709 aa).

Mg(2+)-binding residues include aspartate 487 and aspartate 493. The KH domain maps to 554–613 (PRIHTMKISSDKIKDVIGKGGAVIRALCEETGTTIEIEDDGTIKIAATEGAAAKEAIRRI). The S1 motif domain occupies 623-691 (GKIYPGKVMR…RQGRIRLSIK (69 aa)).

This sequence belongs to the polyribonucleotide nucleotidyltransferase family. Component of the RNA degradosome, which is a multiprotein complex involved in RNA processing and mRNA degradation. Mg(2+) serves as cofactor.

Its subcellular location is the cytoplasm. The enzyme catalyses RNA(n+1) + phosphate = RNA(n) + a ribonucleoside 5'-diphosphate. Its function is as follows. Involved in mRNA degradation. Catalyzes the phosphorolysis of single-stranded polyribonucleotides processively in the 3'- to 5'-direction. This chain is Polyribonucleotide nucleotidyltransferase, found in Aliivibrio salmonicida (strain LFI1238) (Vibrio salmonicida (strain LFI1238)).